The primary structure comprises 168 residues: Probable prefoldin subunit 5 (168 aa).

It belongs to the prefoldin subunit alpha family. Heterohexamer of two PFD-alpha type and four PFD-beta type subunits.

In terms of biological role, binds specifically to cytosolic chaperonin (c-CPN) and transfers target proteins to it. Binds to nascent polypeptide chain and promotes folding in an environment in which there are many competing pathways for nonnative proteins. The polypeptide is Probable prefoldin subunit 5 (Drosophila melanogaster (Fruit fly)).